We begin with the raw amino-acid sequence, 284 residues long: Signal peptidase I (284 aa).

The chain crosses the membrane as a helical span at residues 4–22; the sequence is NFPLLLVIAVAVCGALALV. The Cytoplasmic segment spans residues 23-58; it reads DLVLFAPRRRAAISSYEGQVNEPDPAVLEKLNKEPL. Residues 59–77 form a helical membrane-spanning segment; it reads LVEYGKSFFPVLFIVLVLR. Topologically, residues 78-284 are periplasmic; sequence SFLVEPFQIP…PNFSRVGVIH (207 aa). Catalysis depends on residues Ser-90 and Lys-145.

The protein belongs to the peptidase S26 family.

Its subcellular location is the cell inner membrane. It catalyses the reaction Cleavage of hydrophobic, N-terminal signal or leader sequences from secreted and periplasmic proteins.. This is Signal peptidase I (lepB) from Pseudomonas aeruginosa (strain ATCC 15692 / DSM 22644 / CIP 104116 / JCM 14847 / LMG 12228 / 1C / PRS 101 / PAO1).